A 142-amino-acid polypeptide reads, in one-letter code: ATP synthase epsilon chain (142 aa).

This sequence belongs to the ATPase epsilon chain family. F-type ATPases have 2 components, CF(1) - the catalytic core - and CF(0) - the membrane proton channel. CF(1) has five subunits: alpha(3), beta(3), gamma(1), delta(1), epsilon(1). CF(0) has three main subunits: a, b and c.

Its subcellular location is the cell inner membrane. In terms of biological role, produces ATP from ADP in the presence of a proton gradient across the membrane. This is ATP synthase epsilon chain from Histophilus somni (strain 129Pt) (Haemophilus somnus).